We begin with the raw amino-acid sequence, 70 residues long: Toxin Boma6d (70 aa).

The LCN-type CS-alpha/beta domain occupies 2–68 (RDAYIAQNYN…VPIKVEGKCH (67 aa)). Disulfide bonds link cysteine 12–cysteine 67, cysteine 16–cysteine 40, cysteine 22–cysteine 50, and cysteine 26–cysteine 52.

This sequence belongs to the long (4 C-C) scorpion toxin superfamily. Sodium channel inhibitor family. Alpha subfamily. In terms of tissue distribution, expressed by the venom gland.

Its subcellular location is the secreted. Functionally, alpha toxins bind voltage-independently at site-3 of sodium channels (Nav) and inhibit the inactivation of the activated channels, thereby blocking neuronal transmission. The sequence is that of Toxin Boma6d from Buthus occitanus mardochei (Moroccan scorpion).